A 360-amino-acid polypeptide reads, in one-letter code: Peptide chain release factor 1 (360 aa).

Glutamine 235 is modified (N5-methylglutamine). The interval 284–313 is disordered; the sequence is AKRQQAEASTRRNLLGSGDRSDRNRTYNFP.

This sequence belongs to the prokaryotic/mitochondrial release factor family. Post-translationally, methylated by PrmC. Methylation increases the termination efficiency of RF1.

The protein localises to the cytoplasm. In terms of biological role, peptide chain release factor 1 directs the termination of translation in response to the peptide chain termination codons UAG and UAA. In Escherichia coli (strain UTI89 / UPEC), this protein is Peptide chain release factor 1.